We begin with the raw amino-acid sequence, 153 residues long: Deoxyuridine 5'-triphosphate nucleotidohydrolase (153 aa).

Residues Arg-71–Gly-73, Asn-84, Thr-88–Asp-90, and Lys-98 contribute to the substrate site.

It belongs to the dUTPase family. Requires Mg(2+) as cofactor.

It catalyses the reaction dUTP + H2O = dUMP + diphosphate + H(+). It participates in pyrimidine metabolism; dUMP biosynthesis; dUMP from dCTP (dUTP route): step 2/2. Its function is as follows. This enzyme is involved in nucleotide metabolism: it produces dUMP, the immediate precursor of thymidine nucleotides and it decreases the intracellular concentration of dUTP so that uracil cannot be incorporated into DNA. In Wolbachia sp. subsp. Drosophila simulans (strain wRi), this protein is Deoxyuridine 5'-triphosphate nucleotidohydrolase.